A 356-amino-acid polypeptide reads, in one-letter code: Replication factor C subunit 3 (356 aa).

K20 carries the post-translational modification N6-acetyllysine. Residue S125 is modified to Phosphoserine.

This sequence belongs to the activator 1 small subunits family. In terms of assembly, subunit of the RFC complex, an heteropentameric complex consisting of a large subunit RFC1 and four small subunits RFC2, RFC3, RFC4 and RFC5; the RFC complex interacts with PCNA. Forms an heterotetrameric complex with RFC2, RFC4 and RFC5; this complex has ATPase activity but is not stimulated by PCNA. The heterotetramer of subunits RFC2, RFC3, RFC4 and RFC5 interacts with RAD17. Interacts with CNTD1; this interaction facilitates crossover formation.

The protein localises to the nucleus. Its function is as follows. Subunit of the replication factor C (RFC) complex which acts during elongation of primed DNA templates by DNA polymerases delta and epsilon, and is necessary for ATP-dependent loading of proliferating cell nuclear antigen (PCNA) onto primed DNA. This chain is Replication factor C subunit 3 (Rfc3), found in Mus musculus (Mouse).